We begin with the raw amino-acid sequence, 171 residues long: O-acetyl-ADP-ribose deacetylase 2 (171 aa).

Residues 1 to 171 (MNKITVIQGD…NYDLYLKLLN (171 aa)) form the Macro domain. Substrate is bound by residues 10 to 11 (DI), asparagine 24, 32 to 34 (GVD), and 121 to 125 (STGIY). Residue aspartate 34 is the Proton acceptor of the active site.

The protein belongs to the MacroD-type family. YmdB subfamily. As to quaternary structure, homodimer. Interacts with RNase III.

The catalysed reaction is 3''-O-acetyl-ADP-D-ribose + H2O = ADP-D-ribose + acetate + H(+). It catalyses the reaction 2''-O-acetyl-ADP-D-ribose + H2O = ADP-D-ribose + acetate + H(+). Functionally, deacetylates O-acetyl-ADP ribose to yield ADP-ribose and free acetate. Down-regulates ribonuclease 3 (RNase III) activity. Acts by interacting directly with the region of the ribonuclease that is required for dimerization/activation. In Pantoea vagans (strain C9-1) (Pantoea agglomerans (strain C9-1)), this protein is O-acetyl-ADP-ribose deacetylase 2.